We begin with the raw amino-acid sequence, 246 residues long: CTD nuclear envelope phosphatase 1 homolog (246 aa).

The helical transmembrane segment at 3–23 threads the bilayer; that stretch reads TIAQSVFCFLAGFFNFFLLYF. The FCP1 homology domain occupies 53–220; the sequence is LTVKRKILVL…LNLLPFLDAL (168 aa).

The protein belongs to the dullard family.

It localises to the membrane. Its subcellular location is the nucleus envelope. It catalyses the reaction O-phospho-L-seryl-[protein] + H2O = L-seryl-[protein] + phosphate. It carries out the reaction O-phospho-L-threonyl-[protein] + H2O = L-threonyl-[protein] + phosphate. Its function is as follows. Serine/threonine protein phosphatase that may dephosphorylate and activate lipin-like phosphatases. Lipins are phosphatidate phosphatases that catalyze the conversion of phosphatidic acid to diacylglycerol and control the metabolism of fatty acids at different levels. May indirectly modulate the lipid composition of nuclear and/or endoplasmic reticulum membranes and be required for proper nuclear membrane morphology and/or dynamics. Contributes to closure of nuclear envelope (NE) holes and prevents excess nuclear membranes after meiosis and mitosis, possibly through spatial regulation of lipin. May limit the production of endoplasmic reticulum (ER) sheets proximal to the NE to prevent the ER membranes that feed into NE openings from invading the nuclear interior and thereby restrict nuclear transport to nuclear pore complexes (NPCs). May also indirectly regulate the production of lipid droplets and triacylglycerol. This is CTD nuclear envelope phosphatase 1 homolog (cnep-1) from Caenorhabditis elegans.